Reading from the N-terminus, the 527-residue chain is UPF0053 protein YegH (527 aa).

5 consecutive transmembrane segments (helical) span residues 14–34 (ITLI…IAIL), 51–71 (LLLA…LVTL), 81–101 (FTFS…LFKA), 145–165 (ITAV…VIAI), and 185–205 (IVIL…AEGF). CBS domains are found at residues 306–366 (MTSR…GEPL) and 371–429 (LIRQ…PNEV).

It belongs to the UPF0053 family.

The protein localises to the cell membrane. This is UPF0053 protein YegH (yegH) from Escherichia coli (strain K12).